The sequence spans 388 residues: Chorismate synthase (388 aa).

Residues arginine 39 and arginine 45 each contribute to the NADP(+) site. Residues 130–132, 251–252, glycine 296, 311–315, and arginine 337 contribute to the FMN site; these read RSS, NA, and KPIPT.

This sequence belongs to the chorismate synthase family. In terms of assembly, homotetramer. FMNH2 is required as a cofactor.

The enzyme catalyses 5-O-(1-carboxyvinyl)-3-phosphoshikimate = chorismate + phosphate. The protein operates within metabolic intermediate biosynthesis; chorismate biosynthesis; chorismate from D-erythrose 4-phosphate and phosphoenolpyruvate: step 7/7. In terms of biological role, catalyzes the anti-1,4-elimination of the C-3 phosphate and the C-6 proR hydrogen from 5-enolpyruvylshikimate-3-phosphate (EPSP) to yield chorismate, which is the branch point compound that serves as the starting substrate for the three terminal pathways of aromatic amino acid biosynthesis. This reaction introduces a second double bond into the aromatic ring system. The protein is Chorismate synthase of Lactococcus lactis subsp. cremoris (strain SK11).